The chain runs to 1168 residues: Pre-mRNA-splicing factor ATP-dependent RNA helicase prp22 (1168 aa).

Disordered stretches follow at residues 77–100 (KDDIPTDNVNNGSNSVNGASHDLD) and 144–197 (TLAK…RSSR). The segment covering 84 to 94 (NVNNGSNSVNG) has biased composition (low complexity). Residues 149–173 (RRNDRDSRRDERHYLNGIRERRERS) show a composition bias toward basic and acidic residues. Residues 184 to 197 (TSISGQSHSSRSSR) are compositionally biased toward low complexity. One can recognise an S1 motif domain in the interval 207 to 280 (YGIYSGVVSG…SAKRISLSMK (74 aa)). The disordered stretch occupies residues 287–314 (GEDLNPDQVSRSTKKGSGANAIPLSAQN). Residues 520–684 (LEAVSKNQIL…FYKCPIFTIP (165 aa)) enclose the Helicase ATP-binding domain. 533-540 (GETGSGKT) provides a ligand contact to ATP. The short motif at 631 to 634 (DEAH) is the DEAH box element. The 181-residue stretch at 702 to 882 (YLDAALMTVM…HTILMLKAMG (181 aa)) folds into the Helicase C-terminal domain.

It belongs to the DEAD box helicase family. DEAH subfamily. DDX8/PRP22 sub-subfamily. As to quaternary structure, belongs to the 40S cdc5-associated complex (or cwf complex), a spliceosome sub-complex reminiscent of a late-stage spliceosome composed of the U2, U5 and U6 snRNAs and at least brr2, cdc5, cwf2/prp3, cwf3/syf1, cwf4/syf3, cwf5/ecm2, spp42/cwf6, cwf7/spf27, cwf8, cwf9, cwf10, cwf11, cwf12, prp45/cwf13, cwf14, cwf15, cwf16, cwf17, cwf18, cwf19, cwf20, cwf21, cwf22, cwf23, cwf24, cwf25, cwf26, cyp7/cwf27, cwf28, cwf29/ist3, lea1, msl1, prp5/cwf1, prp10, prp12/sap130, prp17, prp22, sap61, sap62, sap114, sap145, slu7, smb1, smd1, smd3, smf1, smg1 and syf2.

Its subcellular location is the nucleus. The catalysed reaction is ATP + H2O = ADP + phosphate + H(+). In terms of biological role, acts late in the splicing of pre-mRNA. Required for the splicing of introns with a branch nucleotide to 3'-splice site distance greater or equal to 15. Mediates the release of the spliced mRNA from spliceosomes. This Schizosaccharomyces pombe (strain 972 / ATCC 24843) (Fission yeast) protein is Pre-mRNA-splicing factor ATP-dependent RNA helicase prp22 (prp22).